Here is a 138-residue protein sequence, read N- to C-terminus: Putative phosphatidylinositol 3,4,5-trisphosphate 3-phosphatase TPTE2P1 (138 aa).

The C2 tensin-type domain maps to 1-75; it reads MPAAFPCVFP…FAVEILFGMV (75 aa).

This chain is Putative phosphatidylinositol 3,4,5-trisphosphate 3-phosphatase TPTE2P1 (TPTE2P1), found in Homo sapiens (Human).